The sequence spans 228 residues: Cytidylate kinase (228 aa).

11-19 (GPAGTGKSS) is an ATP binding site.

It belongs to the cytidylate kinase family. Type 1 subfamily.

It is found in the cytoplasm. It carries out the reaction CMP + ATP = CDP + ADP. The catalysed reaction is dCMP + ATP = dCDP + ADP. This chain is Cytidylate kinase, found in Mycobacterium avium (strain 104).